Consider the following 142-residue polypeptide: Peptide methionine sulfoxide reductase MsrB (142 aa).

The 124-residue stretch at 2–125 (LKKDKSELTD…NSAAIQFIPY (124 aa)) folds into the MsrB domain. Cys-114 functions as the Nucleophile in the catalytic mechanism.

This sequence belongs to the MsrB Met sulfoxide reductase family.

The catalysed reaction is L-methionyl-[protein] + [thioredoxin]-disulfide + H2O = L-methionyl-(R)-S-oxide-[protein] + [thioredoxin]-dithiol. In Staphylococcus aureus (strain Mu3 / ATCC 700698), this protein is Peptide methionine sulfoxide reductase MsrB.